Here is a 258-residue protein sequence, read N- to C-terminus: 4-hydroxy-tetrahydrodipicolinate reductase (258 aa).

Residues 9-14, 91-93, and 115-118 each bind NAD(+); these read GASGRM, GTT, and SPNM. H148 functions as the Proton donor/acceptor in the catalytic mechanism. Position 149 (H149) interacts with (S)-2,3,4,5-tetrahydrodipicolinate. The Proton donor role is filled by K152. A (S)-2,3,4,5-tetrahydrodipicolinate-binding site is contributed by 158–159; sequence GT.

The protein belongs to the DapB family.

It is found in the cytoplasm. The enzyme catalyses (S)-2,3,4,5-tetrahydrodipicolinate + NAD(+) + H2O = (2S,4S)-4-hydroxy-2,3,4,5-tetrahydrodipicolinate + NADH + H(+). It catalyses the reaction (S)-2,3,4,5-tetrahydrodipicolinate + NADP(+) + H2O = (2S,4S)-4-hydroxy-2,3,4,5-tetrahydrodipicolinate + NADPH + H(+). The protein operates within amino-acid biosynthesis; L-lysine biosynthesis via DAP pathway; (S)-tetrahydrodipicolinate from L-aspartate: step 4/4. Its function is as follows. Catalyzes the conversion of 4-hydroxy-tetrahydrodipicolinate (HTPA) to tetrahydrodipicolinate. This chain is 4-hydroxy-tetrahydrodipicolinate reductase, found in Lawsonia intracellularis (strain PHE/MN1-00).